A 355-amino-acid polypeptide reads, in one-letter code: DNA-directed RNA polymerase subunit alpha (355 aa).

The segment at 1 to 248 (MYYNNDVSLC…EQLQPFISSD (248 aa)) is alpha N-terminal domain (alpha-NTD). The alpha C-terminal domain (alpha-CTD) stretch occupies residues 267-355 (YDPVLLRKVD…ELAKQHTDED (89 aa)).

This sequence belongs to the RNA polymerase alpha chain family. In terms of assembly, homodimer. The RNAP catalytic core consists of 2 alpha, 1 beta, 1 beta' and 1 omega subunit. When a sigma factor is associated with the core the holoenzyme is formed, which can initiate transcription.

It carries out the reaction RNA(n) + a ribonucleoside 5'-triphosphate = RNA(n+1) + diphosphate. Its function is as follows. DNA-dependent RNA polymerase catalyzes the transcription of DNA into RNA using the four ribonucleoside triphosphates as substrates. In Wolbachia pipientis wMel, this protein is DNA-directed RNA polymerase subunit alpha.